The chain runs to 162 residues: 2-C-methyl-D-erythritol 2,4-cyclodiphosphate synthase (162 aa).

2 residues coordinate a divalent metal cation: D9 and H11. 4-CDP-2-C-methyl-D-erythritol 2-phosphate is bound by residues 9 to 11 (DVH) and 37 to 38 (HS). Position 45 (H45) interacts with a divalent metal cation.

It belongs to the IspF family. Homotrimer. A divalent metal cation is required as a cofactor.

It catalyses the reaction 4-CDP-2-C-methyl-D-erythritol 2-phosphate = 2-C-methyl-D-erythritol 2,4-cyclic diphosphate + CMP. It functions in the pathway isoprenoid biosynthesis; isopentenyl diphosphate biosynthesis via DXP pathway; isopentenyl diphosphate from 1-deoxy-D-xylulose 5-phosphate: step 4/6. In terms of biological role, involved in the biosynthesis of isopentenyl diphosphate (IPP) and dimethylallyl diphosphate (DMAPP), two major building blocks of isoprenoid compounds. Catalyzes the conversion of 4-diphosphocytidyl-2-C-methyl-D-erythritol 2-phosphate (CDP-ME2P) to 2-C-methyl-D-erythritol 2,4-cyclodiphosphate (ME-CPP) with a corresponding release of cytidine 5-monophosphate (CMP). The polypeptide is 2-C-methyl-D-erythritol 2,4-cyclodiphosphate synthase (Petrotoga mobilis (strain DSM 10674 / SJ95)).